Consider the following 1040-residue polypeptide: Multidrug resistance protein MdtB (1040 aa).

Transmembrane regions (helical) follow at residues 16–36 (FIMRPVATTLLMVAILLAGII), 347–367 (LMMAIALVVMIIYLFLRNIPA), 369–389 (IIPGVAVPLSLIGTFAVMVFL), 396–416 (LTLMALTIATGFVVDDAIVVI), 440–460 (IGFTIISLTFSLIAVLIPLLF), 472–492 (FAITLAVAILISAVVSLTLTP), 537–557 (WLTLSVALSTLLLSVLLWVFI), 863–883 (LGSTVWLIVAAVVAMYIVLGI), 888–908 (FIHPITILSTLPTAGVGALLA), 911–931 (IAGSELDVIAIIGIILLIGIV), 968–988 (ILMTTLAALLGALPLMLSTGV), and 998–1018 (IGMVGGLIVSQVLTLFTTPVI).

It belongs to the resistance-nodulation-cell division (RND) (TC 2.A.6) family. MdtB subfamily. As to quaternary structure, part of a tripartite efflux system composed of MdtA, MdtB and MdtC. MdtB forms a heteromultimer with MdtC.

The protein resides in the cell inner membrane. Functionally, the MdtABC tripartite complex confers resistance against novobiocin and deoxycholate. The chain is Multidrug resistance protein MdtB from Escherichia coli (strain 55989 / EAEC).